The following is a 311-amino-acid chain: Bifunctional protein FolD (311 aa).

NADP(+) is bound at residue glycine 174 to glycine 176.

The protein belongs to the tetrahydrofolate dehydrogenase/cyclohydrolase family. Homodimer.

The catalysed reaction is (6R)-5,10-methylene-5,6,7,8-tetrahydrofolate + NADP(+) = (6R)-5,10-methenyltetrahydrofolate + NADPH. It carries out the reaction (6R)-5,10-methenyltetrahydrofolate + H2O = (6R)-10-formyltetrahydrofolate + H(+). The protein operates within one-carbon metabolism; tetrahydrofolate interconversion. Functionally, catalyzes the oxidation of 5,10-methylenetetrahydrofolate to 5,10-methenyltetrahydrofolate and then the hydrolysis of 5,10-methenyltetrahydrofolate to 10-formyltetrahydrofolate. This is Bifunctional protein FolD from Pyrobaculum aerophilum (strain ATCC 51768 / DSM 7523 / JCM 9630 / CIP 104966 / NBRC 100827 / IM2).